The following is a 285-amino-acid chain: Steroidogenic acute regulatory protein, mitochondrial (285 aa).

The N-terminal 63 residues, 1 to 63, are a transit peptide targeting the mitochondrion; that stretch reads MLLATFKLCA…RRSSLLGSRL (63 aa). Phosphoserine; by PKA is present on residues Ser-57 and Ser-195. An START domain is found at 67 to 280; sequence LYSDQELAYL…LRKRLESHPA (214 aa).

In terms of assembly, may interact with TSPO. In terms of tissue distribution, expressed in gonads, adrenal cortex and kidney.

Its subcellular location is the mitochondrion. The enzyme catalyses cholesterol(in) = cholesterol(out). It participates in steroid metabolism; cholesterol metabolism. Functionally, plays a key role in steroid hormone synthesis by enhancing the metabolism of cholesterol into pregnenolone. Mediates the transfer of cholesterol from the outer mitochondrial membrane to the inner mitochondrial membrane where it is cleaved to pregnenolone. This is Steroidogenic acute regulatory protein, mitochondrial (STAR) from Homo sapiens (Human).